The sequence spans 156 residues: MARRRRAEVRPVQPDLVYQDVLVSAMINRIMRDGKKNLASRIFYGACRLVQERTGQEPLKVFKQAYDNVKPRVEVRSRRVGGSTYQVPVEVGPRRQQSLTLRWMISAVDGRPERTAIERLAGEIMDAAQGRGGAIKKKDDVERMAEANRAYAHYRW.

This sequence belongs to the universal ribosomal protein uS7 family. Part of the 30S ribosomal subunit. Contacts proteins S9 and S11.

Functionally, one of the primary rRNA binding proteins, it binds directly to 16S rRNA where it nucleates assembly of the head domain of the 30S subunit. Is located at the subunit interface close to the decoding center, probably blocks exit of the E-site tRNA. In Deinococcus radiodurans (strain ATCC 13939 / DSM 20539 / JCM 16871 / CCUG 27074 / LMG 4051 / NBRC 15346 / NCIMB 9279 / VKM B-1422 / R1), this protein is Small ribosomal subunit protein uS7.